Here is a 145-residue protein sequence, read N- to C-terminus: Large ribosomal subunit protein uL15 (145 aa).

Residues 1–50 (MLHTIKPVTNARKSTKRLGRGPGSGTGKTSGKGHKGQLARSGKTLRPGFE) are disordered. The segment covering 20 to 30 (RGPGSGTGKTS) has biased composition (gly residues).

It belongs to the universal ribosomal protein uL15 family. Part of the 50S ribosomal subunit.

Functionally, binds to the 23S rRNA. The protein is Large ribosomal subunit protein uL15 of Aster yellows witches'-broom phytoplasma (strain AYWB).